We begin with the raw amino-acid sequence, 217 residues long: Ribonuclease HII 2 (217 aa).

Positions 28 to 217 (GLLAGVDEAG…VREVLLERRP (190 aa)) constitute an RNase H type-2 domain. A divalent metal cation contacts are provided by D34, E35, and D126.

It belongs to the RNase HII family. Mn(2+) serves as cofactor. The cofactor is Mg(2+).

The protein resides in the cytoplasm. It carries out the reaction Endonucleolytic cleavage to 5'-phosphomonoester.. Endonuclease that specifically degrades the RNA of RNA-DNA hybrids. The protein is Ribonuclease HII 2 of Methylibium petroleiphilum (strain ATCC BAA-1232 / LMG 22953 / PM1).